Consider the following 115-residue polypeptide: Large ribosomal subunit protein bL19 (115 aa).

The protein belongs to the bacterial ribosomal protein bL19 family.

This protein is located at the 30S-50S ribosomal subunit interface and may play a role in the structure and function of the aminoacyl-tRNA binding site. This Buchnera aphidicola subsp. Schizaphis graminum (strain Sg) protein is Large ribosomal subunit protein bL19.